We begin with the raw amino-acid sequence, 164 residues long: UPF0304 protein PM1500 (164 aa).

This sequence belongs to the UPF0304 family.

This Pasteurella multocida (strain Pm70) protein is UPF0304 protein PM1500.